A 911-amino-acid chain; its full sequence is Disks large homolog 1 (911 aa).

One can recognise an L27 domain in the interval 4–64 (RKQDTQRALH…FYEVTLLDNP (61 aa)). Ser39 bears the Phosphoserine; by CaMK2 mark. Residues 70–105 (SKQCEPVQPGNPWESGSLSSAAVTSESLPGGLSPPV) form a disordered region. A compositionally biased stretch (polar residues) spans 83–96 (ESGSLSSAAVTSES). Ser122, Ser138, and Ser158 each carry phosphoserine. Residues 162–212 (PTEAVPPSSPIVPVTPALPVPAESPVVLPSTPQANPPPVLVNTDSLETPTY) form an interaction with SH3 domains region. 2 consecutive PDZ domains span residues 224–310 (EITL…VKRR) and 318–404 (EIKL…AAKP). A required for interaction with MARCHF2 region spans residues 224 to 545 (EITLERGNSG…QAVTIVAQYR (322 aa)). Ser232 carries the post-translational modification Phosphoserine; by CaMK2. The residue at position 398 (Tyr398) is a Phosphotyrosine. Residues 419-441 (TNSSSQSVDNHVSPSSYLGQTPA) show a composition bias toward polar residues. Residues 419 to 443 (TNSSSQSVDNHVSPSSYLGQTPASP) form a disordered region. The 81-residue stretch at 465-545 (KVVLHRGSTG…QAVTIVAQYR (81 aa)) folds into the PDZ 3 domain. Residues Ser567, Ser572, Ser574, Ser578, Ser597, Ser618, Ser684, Ser687, and Ser841 each carry the phosphoserine modification. The SH3 domain maps to 580 to 650 (KRSLYVRALF…PSKRRVEKKE (71 aa)). A disordered region spans residues 662–696 (KTRGDKGEIPDDMGSKGLKHVTSNASDSESSYHEY). In terms of domain architecture, Guanylate kinase-like spans 721–896 (TRPVIILGPM…IYNQVKQIIE (176 aa)).

The protein belongs to the MAGUK family. Homotetramer. Interacts (via guanylate kinase-like domain) with DLGAP1, DLGAP2, DLGAP3, DLGAP4 and MAP1A. Interacts (via guanylate kinase-like domain) with KIF13B. May interact with HTR2A. Interacts (via PDZ domains) with GRIA1. Interacts (via PDZ domains) with GRIN2A. Interacts (via PDZ domains) with KCND2 and KCND3. Interacts (via PDZ domains) with KCNA1, KCNA2, KCNA3 and KCNA4. Interacts (via PDZ domains) with ADGRA3. Interacts with KCNF1. Interacts with CAMK2. Interacts with cytoskeleton-associated protein EPB41. Interacts with cytoskeleton-associated protein EZR. Found in a complex with KCNA5 and CAV3. Found in a complex with APC and CTNNB1. Interacts (via PDZ domains) with APC. Interacts with CDH1 through binding to PIK3R1. Forms multiprotein complexes with CASK, LIN7A, LIN7B, LIN7C, APBA1, and KCNJ12. Interacts with TOPK. Forms a tripartite complex composed of DLG1, MPP7 and LIN7 (LIN7A or LIN7C). May interact with TJAP1. Interacts with PTEN. Interacts with FRMPD4 (via C-terminus). Interacts with LRFN1 and LRFN2. Interacts with LRFN4 and SFPQ. Interacts (via PDZ domains) with ADGRA2 (via PDZ-binding motif). Interacts with ADAM10; this interaction recruits ADAM10 to the cell membrane during long-term depression in hippocampal neurons. Interacts with DGKI (via PDZ-binding motif). Interacts (via PDZ domains) with MARCHF2 (via PDZ domain); the interaction leads to DLG1 ubiqtuitination and degradation. Interacts (via N-terminus) with MPP3; this interaction connects CADM1 with DLG1 and links CADM1 with the regulatory subunit of phosphoinositide-3-kinase (PI3K) by forming a multiprotein complex and participates in cell spreading. In terms of processing, phosphorylated by MAPK12. Phosphorylation of Ser-39 modulates transport to the plasma membrane. Phosphorylation of Ser-232 regulates association with GRIN2A. Post-translationally, ubiquitinated; by MARCHF2 which results in its degradation. As to expression, widely expressed. Strongly expressed in epithelial cells, in the small intestine it is only detected in the vili. Expressed in brain, heart (at protein level), muscle, lung and liver. In the brain it was detected in olfactory bulbs, cerebral cortex, hippocampus, and spinal cord (at protein level).

The protein resides in the cell membrane. It localises to the basolateral cell membrane. It is found in the endoplasmic reticulum membrane. Its subcellular location is the postsynaptic density. The protein localises to the synapse. The protein resides in the sarcolemma. It localises to the cell junction. It is found in the cytoplasm. Its subcellular location is the apical cell membrane. Essential multidomain scaffolding protein required for normal development. Recruits channels, receptors and signaling molecules to discrete plasma membrane domains in polarized cells. Promotes epithelial cell layer barrier function via maintaining cell-cell adhesion. May play a role in adherens junction assembly, signal transduction, cell proliferation, synaptogenesis and lymphocyte activation. Regulates the excitability of cardiac myocytes by modulating the functional expression of Kv4 channels. Functional regulator of Kv1.5 channel. During long-term depression in hippocampal neurons, it recruits ADAM10 to the plasma membrane. The protein is Disks large homolog 1 of Rattus norvegicus (Rat).